The chain runs to 374 residues: Anhydro-N-acetylmuramic acid kinase (374 aa).

Residue 12-19 (GTSLDGID) participates in ATP binding.

Belongs to the anhydro-N-acetylmuramic acid kinase family.

It catalyses the reaction 1,6-anhydro-N-acetyl-beta-muramate + ATP + H2O = N-acetyl-D-muramate 6-phosphate + ADP + H(+). It functions in the pathway amino-sugar metabolism; 1,6-anhydro-N-acetylmuramate degradation. Its pathway is cell wall biogenesis; peptidoglycan recycling. Its function is as follows. Catalyzes the specific phosphorylation of 1,6-anhydro-N-acetylmuramic acid (anhMurNAc) with the simultaneous cleavage of the 1,6-anhydro ring, generating MurNAc-6-P. Is required for the utilization of anhMurNAc either imported from the medium or derived from its own cell wall murein, and thus plays a role in cell wall recycling. The polypeptide is Anhydro-N-acetylmuramic acid kinase (Klebsiella pneumoniae subsp. pneumoniae (strain ATCC 700721 / MGH 78578)).